The sequence spans 142 residues: Galactose-6-phosphate isomerase subunit LacA (142 aa).

It belongs to the LacAB/RpiB family. In terms of assembly, heteromultimeric protein consisting of LacA and LacB.

The enzyme catalyses aldehydo-D-galactose 6-phosphate = keto-D-tagatose 6-phosphate. The protein operates within carbohydrate metabolism; D-galactose 6-phosphate degradation; D-tagatose 6-phosphate from D-galactose 6-phosphate: step 1/1. The polypeptide is Galactose-6-phosphate isomerase subunit LacA (Staphylococcus aureus).